Consider the following 179-residue polypeptide: Large ribosomal subunit protein uL5 (179 aa).

Belongs to the universal ribosomal protein uL5 family. In terms of assembly, part of the 50S ribosomal subunit; part of the 5S rRNA/L5/L18/L25 subcomplex. Contacts the 5S rRNA and the P site tRNA. Forms a bridge to the 30S subunit in the 70S ribosome.

Its function is as follows. This is one of the proteins that bind and probably mediate the attachment of the 5S RNA into the large ribosomal subunit, where it forms part of the central protuberance. In the 70S ribosome it contacts protein S13 of the 30S subunit (bridge B1b), connecting the 2 subunits; this bridge is implicated in subunit movement. Contacts the P site tRNA; the 5S rRNA and some of its associated proteins might help stabilize positioning of ribosome-bound tRNAs. The polypeptide is Large ribosomal subunit protein uL5 (Bacillus mycoides (strain KBAB4) (Bacillus weihenstephanensis)).